The sequence spans 806 residues: MYVLNRKGEEEDISFDQILKRIQRLSYGLHELVDPARVTQGVINGMYSGIKTCELDELAAQTCAYMATTHPDFSILAARITTDNLHKNTSDDVAEVAEALYTYKDVRGRPASLISKEVYDFILLHKDRLNKEIDYTRDFNYDYFGFKTLERSYLLRINNKIIERPQHLLMRVSIGIHIDDIDKALETYHLMSQKYFTHATPTLFNSGTPRPQMSSCFLLSMKADSIEGIFETLKQCALISKTAGGIGVAVQDIRGQNSYIRGTNGISNGLVPMLRVFNDTARYVDQGGGKRKGSFAVYIEPWHSDIFEFLDLRKNHGKEELRARDLFYAVWVPDLFMKRVKENKNWTLMCPNECPGLSETWGEEFEKLYTKYEEENMGKKTVLAQDLWFAILQSQIETGVPYMLYKDSCNAKSNQKNLGTIKCSNLCCEIIEYTSPDEVAVCNLASIALCKFVDLEKKEFNFKKLYEITKIITRNLDKIIERNYYPVKEAKTSNTRHRPIGIGVQGLADTFMLLRYPYESDAAKELNKRIFETMYYAALEMSVELASIHGPYESYQGSPASQGILQFDMWNAKVDNKYWDWDELKAKIRKHGLRNSLLLAPMPTASTSQILGNNESFEPYTSNIYYRRVLSGEFFVVNPHLLKDLFDRGLWDEDMKQQLIAHNGSIQYISEIPDDLKELYKTVWEIKQKNIIDMAADRGIFIDQSQSLNIYIQKPTFAKLSSMHFYGWEKGLKTGAYYLRTQAATDAIKFTVDTHVAKNAVKLKNADGVQITREVSRETISTESTVTQNVCPLRRNNDEQCLMCSG.

The ATP-cone domain occupies 1–91 (MYVLNRKGEE…TDNLHKNTSD (91 aa)). Residues 5–6 (NR), 11–17 (EDISFDQ), Thr-52, and Asp-56 contribute to the ATP site. GDP is bound at residue Ser-215. A disulfide bridge connects residues Cys-216 and Cys-442. Residues 224–226 (DSI), Lys-241, Arg-254, and 261–262 (RG) each bind dTTP. Asn-425 contributes to the GDP binding site. Asn-425 (proton acceptor) is an active-site residue. Cys-427 serves as the catalytic Cysteine radical intermediate. Residues Glu-429 and 604-607 (TAST) each bind GDP. Residue Glu-429 is the Proton acceptor of the active site.

It belongs to the ribonucleoside diphosphate reductase large chain family. In terms of assembly, heterodimer of a large and a small subunit.

It catalyses the reaction a 2'-deoxyribonucleoside 5'-diphosphate + [thioredoxin]-disulfide + H2O = a ribonucleoside 5'-diphosphate + [thioredoxin]-dithiol. With respect to regulation, under complex allosteric control mediated by deoxynucleoside triphosphates and ATP binding to separate specificity and activation sites on the large subunit. The type of nucleotide bound at the specificity site determines substrate preference. It seems probable that ATP makes the enzyme reduce CDP and UDP, dGTP favors ADP reduction and dTTP favors GDP reduction. Stimulated by ATP and inhibited by dATP binding to the activity site. In terms of biological role, provides the precursors necessary for DNA synthesis. Catalyzes the biosynthesis of deoxyribonucleotides from the corresponding ribonucleotides. The chain is Ribonucleoside-diphosphate reductase large subunit (RNR1) from Plasmodium falciparum (isolate Dd2).